Reading from the N-terminus, the 215-residue chain is Ribonuclease T (215 aa).

The Exonuclease domain maps to 20–194 (VVIDVETAGF…YDTERTAVLF (175 aa)). Mg(2+)-binding residues include D23, E25, H181, and D186. Residue H181 is the Proton donor/acceptor of the active site.

The protein belongs to the RNase T family. In terms of assembly, homodimer. Mg(2+) serves as cofactor.

Trims short 3' overhangs of a variety of RNA species, leaving a one or two nucleotide 3' overhang. Responsible for the end-turnover of tRNA: specifically removes the terminal AMP residue from uncharged tRNA (tRNA-C-C-A). Also appears to be involved in tRNA biosynthesis. This chain is Ribonuclease T, found in Shigella dysenteriae serotype 1 (strain Sd197).